The sequence spans 248 residues: Myelin protein P0 (248 aa).

The first 29 residues, 1 to 29, serve as a signal peptide directing secretion; that stretch reads MAPGAPSSSPSPILAALLFSSLVLSPAQA. The Ig-like V-type domain maps to 30 to 143; the sequence is IVVYTDKEVY…DIVGKTSQVT (114 aa). At 30–153 the chain is on the extracellular side; that stretch reads IVVYTDKEVY…LYVFEKVPTR (124 aa). Cys50 and Cys127 are joined by a disulfide. An N-linked (GlcNAc...) (complex) asparagine glycan is attached at Asn122. The helical transmembrane segment at 154–179 threads the bilayer; the sequence is YGVVLGAVIGGVLGVVLLVLLLFYVV. Residues 180-248 lie on the Cytoplasmic side of the membrane; that stretch reads RYCWLRRQAA…GLGESRKDKK (69 aa). Position 210 is a phosphoserine; by PKC (Ser210). The interval 222 to 248 is disordered; the sequence is MLDHSRSTKAASEKKAKGLGESRKDKK. Residues 224-248 are compositionally biased toward basic and acidic residues; sequence DHSRSTKAASEKKAKGLGESRKDKK. Residues Ser226 and Ser228 each carry the phosphoserine modification. Phosphoserine; by PKC is present on residues Ser233 and Ser243.

It belongs to the myelin P0 protein family. As to quaternary structure, homodimer and homotetramer. N-glycosylated; contains sulfate-substituted glycan.

Its subcellular location is the cell membrane. Is an adhesion molecule necessary for normal myelination in the peripheral nervous system. It mediates adhesion between adjacent myelin wraps and ultimately drives myelin compaction. In Equus caballus (Horse), this protein is Myelin protein P0 (MPZ).